The sequence spans 123 residues: Large ribosomal subunit protein uL29 (123 aa).

Belongs to the universal ribosomal protein uL29 family. Component of the large ribosomal subunit.

It localises to the cytoplasm. Component of the large ribosomal subunit. The ribosome is a large ribonucleoprotein complex responsible for the synthesis of proteins in the cell. The polypeptide is Large ribosomal subunit protein uL29 (rpl35) (Platichthys flesus (European flounder)).